The primary structure comprises 1169 residues: ATP-dependent helicase/deoxyribonuclease subunit B (1169 aa).

One can recognise a UvrD-like helicase ATP-binding domain in the interval 1–296; it reads MTLRIVSGRS…QHVEANFANM (296 aa). 8 to 15 contributes to the ATP binding site; it reads GRSGTGKS. A UvrD-like helicase C-terminal domain is found at 276–582; the sequence is YYTQRFQSED…EFSRIPPTLD (307 aa). The [4Fe-4S] cluster site is built by Cys804, Cys1129, Cys1132, and Cys1138.

Belongs to the helicase family. AddB/RexB type 1 subfamily. Heterodimer of AddA and AddB. Requires Mg(2+) as cofactor. The cofactor is [4Fe-4S] cluster.

The heterodimer acts as both an ATP-dependent DNA helicase and an ATP-dependent, dual-direction single-stranded exonuclease. Recognizes the chi site generating a DNA molecule suitable for the initiation of homologous recombination. The AddB subunit has 5' -&gt; 3' nuclease activity but not helicase activity. The sequence is that of ATP-dependent helicase/deoxyribonuclease subunit B from Lysinibacillus sphaericus (strain C3-41).